The sequence spans 118 residues: Large ribosomal subunit protein bL20 (118 aa).

This sequence belongs to the bacterial ribosomal protein bL20 family.

In terms of biological role, binds directly to 23S ribosomal RNA and is necessary for the in vitro assembly process of the 50S ribosomal subunit. It is not involved in the protein synthesizing functions of that subunit. This Serratia proteamaculans (strain 568) protein is Large ribosomal subunit protein bL20.